The sequence spans 139 residues: Large ribosomal subunit protein uL16 (139 aa).

The span at 1–20 shows a compositional bias: basic residues; that stretch reads MLIPRRVKHRKQHHPKRRGQ. A disordered region spans residues 1–25; the sequence is MLIPRRVKHRKQHHPKRRGQAKGGT.

This sequence belongs to the universal ribosomal protein uL16 family. As to quaternary structure, part of the 50S ribosomal subunit.

In terms of biological role, binds 23S rRNA and is also seen to make contacts with the A and possibly P site tRNAs. This chain is Large ribosomal subunit protein uL16, found in Streptomyces avermitilis (strain ATCC 31267 / DSM 46492 / JCM 5070 / NBRC 14893 / NCIMB 12804 / NRRL 8165 / MA-4680).